A 221-amino-acid polypeptide reads, in one-letter code: Coiled-coil domain-containing protein 70 (221 aa).

Residues Asn-129 to Glu-168 adopt a coiled-coil conformation.

The sequence is that of Coiled-coil domain-containing protein 70 (CCDC70) from Macaca fascicularis (Crab-eating macaque).